The primary structure comprises 248 residues: Triosephosphate isomerase (248 aa).

11–13 contacts substrate; it reads NWK. Catalysis depends on His95, which acts as the Electrophile. Glu167 acts as the Proton acceptor in catalysis. Substrate is bound by residues Gly173, Ser212, and 233–234; that span reads GG.

The protein belongs to the triosephosphate isomerase family. As to quaternary structure, homodimer.

The protein localises to the cytoplasm. It carries out the reaction D-glyceraldehyde 3-phosphate = dihydroxyacetone phosphate. Its pathway is carbohydrate biosynthesis; gluconeogenesis. It functions in the pathway carbohydrate degradation; glycolysis; D-glyceraldehyde 3-phosphate from glycerone phosphate: step 1/1. Its function is as follows. Involved in the gluconeogenesis. Catalyzes stereospecifically the conversion of dihydroxyacetone phosphate (DHAP) to D-glyceraldehyde-3-phosphate (G3P). This is Triosephosphate isomerase from Ralstonia nicotianae (strain ATCC BAA-1114 / GMI1000) (Ralstonia solanacearum).